Reading from the N-terminus, the 230-residue chain is Cytochrome c oxidase subunit 2 (230 aa).

Residues 1 to 14 (MAHPSQLGFQDAAS) lie on the Mitochondrial intermembrane side of the membrane. A helical membrane pass occupies residues 15–45 (PVMEELLHFHDHALMIVLLISTLVLYIIVAM). Residues 46-59 (VSTKLTNKYILDSQ) are Mitochondrial matrix-facing. Residues 60-87 (EIEIVWTVLPAVILILIALPSLRILYLM) form a helical membrane-spanning segment. The Mitochondrial intermembrane portion of the chain corresponds to 88–230 (DEINDPHLTI…KWSTMMLEDA (143 aa)). Positions 161, 196, 198, 200, 204, and 207 each coordinate Cu cation. Glu198 is a binding site for Mg(2+).

The protein belongs to the cytochrome c oxidase subunit 2 family. In terms of assembly, component of the cytochrome c oxidase (complex IV, CIV), a multisubunit enzyme composed of 14 subunits. The complex is composed of a catalytic core of 3 subunits MT-CO1, MT-CO2 and MT-CO3, encoded in the mitochondrial DNA, and 11 supernumerary subunits COX4I, COX5A, COX5B, COX6A, COX6B, COX6C, COX7A, COX7B, COX7C, COX8 and NDUFA4, which are encoded in the nuclear genome. The complex exists as a monomer or a dimer and forms supercomplexes (SCs) in the inner mitochondrial membrane with NADH-ubiquinone oxidoreductase (complex I, CI) and ubiquinol-cytochrome c oxidoreductase (cytochrome b-c1 complex, complex III, CIII), resulting in different assemblies (supercomplex SCI(1)III(2)IV(1) and megacomplex MCI(2)III(2)IV(2)). Found in a complex with TMEM177, COA6, COX18, COX20, SCO1 and SCO2. Interacts with TMEM177 in a COX20-dependent manner. Interacts with COX20. Interacts with COX16. Cu cation is required as a cofactor.

It localises to the mitochondrion inner membrane. It carries out the reaction 4 Fe(II)-[cytochrome c] + O2 + 8 H(+)(in) = 4 Fe(III)-[cytochrome c] + 2 H2O + 4 H(+)(out). In terms of biological role, component of the cytochrome c oxidase, the last enzyme in the mitochondrial electron transport chain which drives oxidative phosphorylation. The respiratory chain contains 3 multisubunit complexes succinate dehydrogenase (complex II, CII), ubiquinol-cytochrome c oxidoreductase (cytochrome b-c1 complex, complex III, CIII) and cytochrome c oxidase (complex IV, CIV), that cooperate to transfer electrons derived from NADH and succinate to molecular oxygen, creating an electrochemical gradient over the inner membrane that drives transmembrane transport and the ATP synthase. Cytochrome c oxidase is the component of the respiratory chain that catalyzes the reduction of oxygen to water. Electrons originating from reduced cytochrome c in the intermembrane space (IMS) are transferred via the dinuclear copper A center (CU(A)) of subunit 2 and heme A of subunit 1 to the active site in subunit 1, a binuclear center (BNC) formed by heme A3 and copper B (CU(B)). The BNC reduces molecular oxygen to 2 water molecules using 4 electrons from cytochrome c in the IMS and 4 protons from the mitochondrial matrix. This Salmo salar (Atlantic salmon) protein is Cytochrome c oxidase subunit 2 (mt-co2).